The chain runs to 92 residues: Cell division protein FtsB (92 aa).

Topologically, residues 1–3 are cytoplasmic; sequence MRL. The chain crosses the membrane as a helical span at residues 4-21; sequence FVFFMLCLLVLLQYHLWF. Topologically, residues 22–92 are periplasmic; it reads GKNGLGDRHN…TFFRIVPKED (71 aa). Residues 28–62 are a coiled coil; it reads DRHNLQEEVTLILENNSELRQRNQMMFSEIKDLKE.

The protein belongs to the FtsB family. As to quaternary structure, part of a complex composed of FtsB, FtsL and FtsQ.

Its subcellular location is the cell inner membrane. Essential cell division protein. May link together the upstream cell division proteins, which are predominantly cytoplasmic, with the downstream cell division proteins, which are predominantly periplasmic. The polypeptide is Cell division protein FtsB (Psychromonas ingrahamii (strain DSM 17664 / CCUG 51855 / 37)).